Reading from the N-terminus, the 491-residue chain is Ketol-acid reductoisomerase (NADP(+)) (491 aa).

The KARI N-terminal Rossmann domain maps to 15-208; the sequence is AQLGKCRFMA…GGHRAGVLES (194 aa). Residues 45–48, Arg68, Arg76, Ser78, and 108–110 contribute to the NADP(+) site; these read CGAQ and DKQ. His132 is an active-site residue. Residue Gly158 coordinates NADP(+). KARI C-terminal knotted domains follow at residues 209-344 and 345-484; these read SFVA…NAPQ and FEGK…MTDM. Residues Asp217, Glu221, Glu389, and Glu393 each contribute to the Mg(2+) site. Residue Ser414 participates in substrate binding.

Belongs to the ketol-acid reductoisomerase family. Requires Mg(2+) as cofactor.

It carries out the reaction (2R)-2,3-dihydroxy-3-methylbutanoate + NADP(+) = (2S)-2-acetolactate + NADPH + H(+). It catalyses the reaction (2R,3R)-2,3-dihydroxy-3-methylpentanoate + NADP(+) = (S)-2-ethyl-2-hydroxy-3-oxobutanoate + NADPH + H(+). It participates in amino-acid biosynthesis; L-isoleucine biosynthesis; L-isoleucine from 2-oxobutanoate: step 2/4. Its pathway is amino-acid biosynthesis; L-valine biosynthesis; L-valine from pyruvate: step 2/4. Its function is as follows. Involved in the biosynthesis of branched-chain amino acids (BCAA). Catalyzes an alkyl-migration followed by a ketol-acid reduction of (S)-2-acetolactate (S2AL) to yield (R)-2,3-dihydroxy-isovalerate. In the isomerase reaction, S2AL is rearranged via a Mg-dependent methyl migration to produce 3-hydroxy-3-methyl-2-ketobutyrate (HMKB). In the reductase reaction, this 2-ketoacid undergoes a metal-dependent reduction by NADPH to yield (R)-2,3-dihydroxy-isovalerate. The polypeptide is Ketol-acid reductoisomerase (NADP(+)) (Serratia proteamaculans (strain 568)).